A 403-amino-acid polypeptide reads, in one-letter code: Argininosuccinate synthase (403 aa).

ATP-binding positions include 13–21 (AYSGGLDTS) and A40. The L-citrulline site is built by Y91 and S96. G121 is an ATP binding site. The L-aspartate site is built by T123, N127, and D128. N127 contacts L-citrulline. L-citrulline is bound by residues R131, S180, S189, E265, and Y277.

It belongs to the argininosuccinate synthase family. Type 1 subfamily. Homotetramer.

The protein resides in the cytoplasm. The enzyme catalyses L-citrulline + L-aspartate + ATP = 2-(N(omega)-L-arginino)succinate + AMP + diphosphate + H(+). It functions in the pathway amino-acid biosynthesis; L-arginine biosynthesis; L-arginine from L-ornithine and carbamoyl phosphate: step 2/3. This is Argininosuccinate synthase from Leptospira interrogans serogroup Icterohaemorrhagiae serovar Lai (strain 56601).